We begin with the raw amino-acid sequence, 314 residues long: Olfactory receptor 5P6 (314 aa).

Residues 1-28 (MAFQEDGNHTAVTEFVLFGLTDDPVLRV) are Extracellular-facing. An N-linked (GlcNAc...) asparagine glycan is attached at Asn-8. Residues 29–49 (ILFIIFLCIYLVTVSGNLSTI) form a helical membrane-spanning segment. Topologically, residues 50–57 (LLIRVSSQ) are cytoplasmic. A helical transmembrane segment spans residues 58 to 78 (LHHPMYFFLSHLAFADIGYSS). The Extracellular segment spans residues 79–102 (SVTPNMLVNFLVERHTISYIGCAI). A disulfide bridge connects residues Cys-100 and Cys-192. A helical transmembrane segment spans residues 103–123 (QLGSVVFFGSSECFILAAMAY). The Cytoplasmic portion of the chain corresponds to 124-136 (DRFMAICNPLLYS). A helical membrane pass occupies residues 137–157 (TKMSTQVCVQLLLIAYIGGFL). Residues 158–199 (NTWSFTICFYSLVFCGPNGVNHFFCDFAPLIELSCSDVSVPA) are Extracellular-facing. A helical membrane pass occupies residues 200-220 (TVPSFTAGSIIVVTVIVIAIS). At 221-240 (YIYILITILKMHSTEGRQKA) the chain is on the cytoplasmic side. A helical transmembrane segment spans residues 241-261 (FSTCTSHLTAVTLFYGTITFI). At 262–274 (YVMPKSSFSTDQN) the chain is on the extracellular side. A helical membrane pass occupies residues 275-295 (KVVSVFYMVVIPMLNPLIYSL). Residues 296–314 (RNNEIKGALKRQIGRKIFS) lie on the Cytoplasmic side of the membrane.

The protein belongs to the G-protein coupled receptor 1 family.

It localises to the cell membrane. Potential odorant receptor. This is Olfactory receptor 5P6 from Mus musculus (Mouse).